Here is a 227-residue protein sequence, read N- to C-terminus: Superoxide dismutase [Cu-Zn] (227 aa).

An N-terminal signal peptide occupies residues 1–19 (MPKLLPPVVLAGCVVALGA). The N-palmitoyl cysteine moiety is linked to residue Cys20. A lipid anchor (S-diacylglycerol cysteine) is attached at Cys20. A disordered region spans residues 23–55 (PQHASSLPGTTPAVWTGSPSPSGAGAAEAAPAA). Residues 39–55 (GSPSPSGAGAAEAAPAA) are compositionally biased toward low complexity. Cu cation-binding residues include His103 and His105. The cysteines at positions 110 and 221 are disulfide-linked. Position 145 (Asp145) interacts with Zn(2+). A Cu cation-binding site is contributed by His182.

The protein belongs to the Cu-Zn superoxide dismutase family. Requires Cu cation as cofactor. It depends on Zn(2+) as a cofactor.

Its subcellular location is the cell membrane. The enzyme catalyses 2 superoxide + 2 H(+) = H2O2 + O2. In terms of biological role, destroys radicals which are normally produced within the cells and which are toxic to biological systems. May play a role in favoring mycobacterial survival in phagocytes. This chain is Superoxide dismutase [Cu-Zn] (sodC), found in Mycolicibacterium paratuberculosis (strain ATCC BAA-968 / K-10) (Mycobacterium paratuberculosis).